We begin with the raw amino-acid sequence, 172 residues long: MDLKEKIRIIDGFPKEGISFKDITTLIGDGEGLKASIDMFVEYLKDKEIDLIVGPEARGFIFGVPVAYALGAGFVPVRKPGKLPGETISVNYDLEYGSDSLQIHKDSIKKGQRVAIVDDLLATGGTVEGVAKLVEEAGGEVVSLAFLIELIDLKGRDKLGDYDVISLTQYDI.

This sequence belongs to the purine/pyrimidine phosphoribosyltransferase family. Homodimer.

The protein resides in the cytoplasm. It catalyses the reaction AMP + diphosphate = 5-phospho-alpha-D-ribose 1-diphosphate + adenine. It participates in purine metabolism; AMP biosynthesis via salvage pathway; AMP from adenine: step 1/1. Functionally, catalyzes a salvage reaction resulting in the formation of AMP, that is energically less costly than de novo synthesis. The chain is Adenine phosphoribosyltransferase from Clostridium botulinum (strain Alaska E43 / Type E3).